A 375-amino-acid chain; its full sequence is Peptidyl-prolyl cis-trans isomerase D (375 aa).

Residues 7–169 enclose the PPIase cyclophilin-type domain; that stretch reads YFDITIANEP…QAVTISSAGV (163 aa). TPR repeat units follow at residues 217–250, 270–307, and 312–345; these read AGKLKEVGTKEFKAGNFAVALDKYQKALRYLDVH, LPLLTNAALCALKLPASPNTSSLVVSLTSRALTLPNLS, and GKALYRRAQAYVLKKDDEAAEKDLKGALECVPGD.

It belongs to the cyclophilin-type PPIase family. PPIase D subfamily.

It localises to the cytoplasm. The catalysed reaction is [protein]-peptidylproline (omega=180) = [protein]-peptidylproline (omega=0). Its function is as follows. PPIases accelerate the folding of proteins. It catalyzes the cis-trans isomerization of proline imidic peptide bonds in oligopeptides. This is Peptidyl-prolyl cis-trans isomerase D (CPR6) from Cryptococcus neoformans var. neoformans serotype D (strain JEC21 / ATCC MYA-565) (Filobasidiella neoformans).